The following is a 193-amino-acid chain: Peptidyl-tRNA hydrolase (193 aa).

Tyrosine 16 serves as a coordination point for tRNA. The active-site Proton acceptor is the histidine 21. TRNA-binding residues include phenylalanine 67, asparagine 69, and asparagine 115.

This sequence belongs to the PTH family. In terms of assembly, monomer.

The protein resides in the cytoplasm. The enzyme catalyses an N-acyl-L-alpha-aminoacyl-tRNA + H2O = an N-acyl-L-amino acid + a tRNA + H(+). Functionally, hydrolyzes ribosome-free peptidyl-tRNAs (with 1 or more amino acids incorporated), which drop off the ribosome during protein synthesis, or as a result of ribosome stalling. Its function is as follows. Catalyzes the release of premature peptidyl moieties from peptidyl-tRNA molecules trapped in stalled 50S ribosomal subunits, and thus maintains levels of free tRNAs and 50S ribosomes. The protein is Peptidyl-tRNA hydrolase of Psychrobacter arcticus (strain DSM 17307 / VKM B-2377 / 273-4).